Here is a 410-residue protein sequence, read N- to C-terminus: Peptidase T (410 aa).

Residue H79 participates in Zn(2+) binding. Residue D81 is part of the active site. D142 serves as a coordination point for Zn(2+). The active-site Proton acceptor is the E176. Zn(2+) is bound by residues E177, D199, and H381.

This sequence belongs to the peptidase M20B family. Zn(2+) serves as cofactor.

Its subcellular location is the cytoplasm. The catalysed reaction is Release of the N-terminal residue from a tripeptide.. Its function is as follows. Cleaves the N-terminal amino acid of tripeptides. The polypeptide is Peptidase T (Listeria innocua serovar 6a (strain ATCC BAA-680 / CLIP 11262)).